Consider the following 309-residue polypeptide: Biotin synthase (309 aa).

In terms of domain architecture, Radical SAM core spans 35–259 (NKIQISSLLS…MIPKSYIRLS (225 aa)). Cysteine 50, cysteine 54, and cysteine 57 together coordinate [4Fe-4S] cluster. Residues cysteine 94, cysteine 125, cysteine 185, and arginine 257 each contribute to the [2Fe-2S] cluster site.

This sequence belongs to the radical SAM superfamily. Biotin synthase family. As to quaternary structure, homodimer. Requires [4Fe-4S] cluster as cofactor. [2Fe-2S] cluster is required as a cofactor.

The catalysed reaction is (4R,5S)-dethiobiotin + (sulfur carrier)-SH + 2 reduced [2Fe-2S]-[ferredoxin] + 2 S-adenosyl-L-methionine = (sulfur carrier)-H + biotin + 2 5'-deoxyadenosine + 2 L-methionine + 2 oxidized [2Fe-2S]-[ferredoxin]. It functions in the pathway cofactor biosynthesis; biotin biosynthesis; biotin from 7,8-diaminononanoate: step 2/2. Its function is as follows. Catalyzes the conversion of dethiobiotin (DTB) to biotin by the insertion of a sulfur atom into dethiobiotin via a radical-based mechanism. The polypeptide is Biotin synthase (Rickettsia felis (strain ATCC VR-1525 / URRWXCal2) (Rickettsia azadi)).